A 28-amino-acid polypeptide reads, in one-letter code: M-poneritoxin-Dq4b/U1-poneritoxin-Dq4c/U1-poneritoxin-Dq4d (28 aa).

At Met20 the chain carries Methionine sulfoxide; in form U1-PONTX-Dq4d. Ala28 carries the alanine amide; in form Dq-1362 and U1-PONTX-Dq4d modification.

In terms of processing, occurs in 3 forms, M-PONTX-Dq4b has an amidated Ala-28, U1-PONTX-Dq4d has an amidated Ala-28 and an oxidized Met-20, U1-PONTX-Dq4c has no modifications at either Met-20 or Ala-28. In terms of tissue distribution, expressed by the venom gland.

It localises to the secreted. Functionally, M-poneritoxin-Dq4b: this synthetic peptide has antimicrobial activity against Gram-positive bacteria B.amyloliquefacies S499 (MIC=0.1 mM), L.monocytogenes 2231 and S.aureus ATCC 29213, against Gram-negative bacteria P.putida BTP1, P.aeruginosa PaO1 and E.coli ATCC 10536, and against the fungi S.cerevisiae, R.mucilaginosa and C.cucumerinum. Not active against the fungi F.oxysporum and B.cinerea. The chain is M-poneritoxin-Dq4b/U1-poneritoxin-Dq4c/U1-poneritoxin-Dq4d from Dinoponera quadriceps (South American ant).